Consider the following 891-residue polypeptide: Extended synaptotagmin-3 (891 aa).

The segment at 1–30 (MQPEEPCAPSAPGGPDVPERGQRSRDPGPR) is disordered. The Cytoplasmic segment spans residues 1–32 (MQPEEPCAPSAPGGPDVPERGQRSRDPGPRLS). Basic and acidic residues predominate over residues 17–28 (VPERGQRSRDPG). Residues 33–53 (GQLLPELYSFVARVLFYLAPV) traverse the membrane as a helical segment. A topological domain (lumenal) is located at residue tyrosine 54. The helical transmembrane segment at 55–75 (LAGYLGLSVTWLLLGALLWMW) threads the bilayer. Residues 76–891 (WRRNRRGKLG…ELTADGQPRS (816 aa)) are Cytoplasmic-facing. The SMP-LTD domain maps to 118–295 (DVERVEWANK…LPNRVTVPVK (178 aa)). C2 domains lie at 292-412 (VPVK…DEWF) and 430-570 (SLLT…QLDH). The Ca(2+) site is built by lysine 325, aspartate 326, aspartate 336, aspartate 383, glutamate 384, aspartate 385, aspartate 387, aspartate 389, and aspartate 390. Positions 652-711 (SAATTDPEPMPEPQGPGPEPKGKDSARGLCESPGKKKNPATTFLTVPGLHSPGPIKSPRP) are disordered. The segment covering 659–670 (EPMPEPQGPGPE) has biased composition (pro residues). The C2 3 domain occupies 759–881 (RLGEIQLTVR…DLIKGFSQWY (123 aa)). The tract at residues 806–813 (RRWASRKK) is required for phosphatidylinositol 4,5-bisphosphate-dependent location at the cell membrane.

The protein belongs to the extended synaptotagmin family.

Its subcellular location is the cell membrane. It is found in the endoplasmic reticulum membrane. Its function is as follows. Tethers the endoplasmic reticulum to the cell membrane and promotes the formation of appositions between the endoplasmic reticulum and the cell membrane. Binds glycerophospholipids in a barrel-like domain and may play a role in cellular lipid transport. The protein is Extended synaptotagmin-3 (Esyt3) of Mus musculus (Mouse).